The following is a 246-amino-acid chain: YjeF N-terminal domain-containing 3 (246 aa).

Residues 24–234 (VATVETELLR…DIQKKYELNL (211 aa)) form the YjeF N-terminal domain.

In terms of assembly, interacts with apoa1a. Binds to high-density lipoprotein.

Functionally, accelerates cholesterol efflux from endothelial cells to high-density lipoprotein (HDL) and thereby regulates angiogenesis. Orchestrates hematopoietic stem and progenitor cell emergence from the hemogenic endothelium, a type of specialized endothelium manifesting hematopoietic potential. YJEFN3-mediated cholesterol efflux activates endothelial SREBF2, the master transcription factor for cholesterol biosynthesis, which in turn transactivates NOTCH and promotes hematopoietic stem and progenitor cell emergence. In Danio rerio (Zebrafish), this protein is YjeF N-terminal domain-containing 3.